The primary structure comprises 670 residues: DNA ligase (670 aa).

Residues 32–36, 81–82, and glutamate 113 each bind NAD(+); these read DAEYD and SL. Lysine 115 functions as the N6-AMP-lysine intermediate in the catalytic mechanism. NAD(+)-binding residues include arginine 136, glutamate 173, lysine 290, and lysine 314. 4 residues coordinate Zn(2+): cysteine 406, cysteine 409, cysteine 424, and cysteine 430. Residues 592-670 enclose the BRCT domain; sequence EIDSPFAGKT…EQEMMRLLGE (79 aa).

This sequence belongs to the NAD-dependent DNA ligase family. LigA subfamily. Mg(2+) is required as a cofactor. The cofactor is Mn(2+).

The enzyme catalyses NAD(+) + (deoxyribonucleotide)n-3'-hydroxyl + 5'-phospho-(deoxyribonucleotide)m = (deoxyribonucleotide)n+m + AMP + beta-nicotinamide D-nucleotide.. DNA ligase that catalyzes the formation of phosphodiester linkages between 5'-phosphoryl and 3'-hydroxyl groups in double-stranded DNA using NAD as a coenzyme and as the energy source for the reaction. It is essential for DNA replication and repair of damaged DNA. This Erwinia tasmaniensis (strain DSM 17950 / CFBP 7177 / CIP 109463 / NCPPB 4357 / Et1/99) protein is DNA ligase.